The primary structure comprises 406 residues: Arginine biosynthesis bifunctional protein ArgJ (406 aa).

Threonine 154, lysine 180, threonine 191, glutamate 278, asparagine 401, and threonine 406 together coordinate substrate. Residue threonine 191 is the Nucleophile of the active site.

Belongs to the ArgJ family. Heterotetramer of two alpha and two beta chains.

It is found in the cytoplasm. The enzyme catalyses N(2)-acetyl-L-ornithine + L-glutamate = N-acetyl-L-glutamate + L-ornithine. The catalysed reaction is L-glutamate + acetyl-CoA = N-acetyl-L-glutamate + CoA + H(+). The protein operates within amino-acid biosynthesis; L-arginine biosynthesis; L-ornithine and N-acetyl-L-glutamate from L-glutamate and N(2)-acetyl-L-ornithine (cyclic): step 1/1. Its pathway is amino-acid biosynthesis; L-arginine biosynthesis; N(2)-acetyl-L-ornithine from L-glutamate: step 1/4. Catalyzes two activities which are involved in the cyclic version of arginine biosynthesis: the synthesis of N-acetylglutamate from glutamate and acetyl-CoA as the acetyl donor, and of ornithine by transacetylation between N(2)-acetylornithine and glutamate. The sequence is that of Arginine biosynthesis bifunctional protein ArgJ from Gloeobacter violaceus (strain ATCC 29082 / PCC 7421).